The sequence spans 549 residues: MSAKYIFVTGGVVSSLGKGLAAASIGCLLEARGLRVNLMKFDPYLNVDPGTMSPFQHGEVFVTDDGAETDLDLGHYERFTHARLTRDNNLTTGRIYEQIITKERRGDYLGKTVQVIPHVTNEIKNAMRKVAADGDVTIVEIGGTVGDIESLPFLEAIRQMRQELGRENTVFVHVTLVPWISAAQELKTKPTQHSVKEMLSIGIQPDILLCRTDRYLPHDIKSKIALFCNLEEKAVITAKDVDSIYEVPLVFAQEGVDKLALRYLHLDTREPDLSRWSALVERCYHPTGEVSIGIVGKYVEYEDSYKSLKEALVHGALAEGLKLRVTWIEAEGLEAPNYEQQLSGFDGILVPGGFGKRGVEGMLNAIRYARENKVPYFGICLGMQTACIEFARNVCGLQGANSSEFDPATPHRIIYKLRELTGVEEMGGTMRLGAWACVLQNGSLAADAYGKTEISERHRHRYEFNREYEAVLTGAGLRISGTTPDSTYVEIVEIPDHPYFLGCQFHPEFKSKPLEPHPLFHAFVKAAYQNHKPHTEATQPAAESAPIGK.

An amidoligase domain region spans residues M1–L266. S14 serves as a coordination point for CTP. S14 lines the UTP pocket. ATP-binding positions include S15–L20 and D72. Residues D72 and E140 each coordinate Mg(2+). CTP contacts are provided by residues D147–E149, K187–Q192, and K223. UTP-binding positions include K187–Q192 and K223. K239–V241 contributes to the ATP binding site. In terms of domain architecture, Glutamine amidotransferase type-1 spans S291 to P533. G353 provides a ligand contact to L-glutamine. C380 functions as the Nucleophile; for glutamine hydrolysis in the catalytic mechanism. Residues L381–Q384, E404, and R461 contribute to the L-glutamine site. Active-site residues include H506 and E508.

It belongs to the CTP synthase family. As to quaternary structure, homotetramer.

It carries out the reaction UTP + L-glutamine + ATP + H2O = CTP + L-glutamate + ADP + phosphate + 2 H(+). The catalysed reaction is L-glutamine + H2O = L-glutamate + NH4(+). It catalyses the reaction UTP + NH4(+) + ATP = CTP + ADP + phosphate + 2 H(+). Its pathway is pyrimidine metabolism; CTP biosynthesis via de novo pathway; CTP from UDP: step 2/2. Its activity is regulated as follows. Allosterically activated by GTP, when glutamine is the substrate; GTP has no effect on the reaction when ammonia is the substrate. The allosteric effector GTP functions by stabilizing the protein conformation that binds the tetrahedral intermediate(s) formed during glutamine hydrolysis. Inhibited by the product CTP, via allosteric rather than competitive inhibition. Its function is as follows. Catalyzes the ATP-dependent amination of UTP to CTP with either L-glutamine or ammonia as the source of nitrogen. Regulates intracellular CTP levels through interactions with the four ribonucleotide triphosphates. In Acidobacterium capsulatum (strain ATCC 51196 / DSM 11244 / BCRC 80197 / JCM 7670 / NBRC 15755 / NCIMB 13165 / 161), this protein is CTP synthase.